We begin with the raw amino-acid sequence, 400 residues long: Phosphoglycerate kinase (400 aa).

Substrate-binding positions include 23–25 (DLN), arginine 38, 61–64 (HFGR), arginine 120, and arginine 153. ATP contacts are provided by residues lysine 203, glutamate 325, and 355–358 (GGDT).

It belongs to the phosphoglycerate kinase family. As to quaternary structure, monomer.

It is found in the cytoplasm. It carries out the reaction (2R)-3-phosphoglycerate + ATP = (2R)-3-phospho-glyceroyl phosphate + ADP. It participates in carbohydrate degradation; glycolysis; pyruvate from D-glyceraldehyde 3-phosphate: step 2/5. The protein is Phosphoglycerate kinase of Methylorubrum extorquens (strain PA1) (Methylobacterium extorquens).